The following is a 447-amino-acid chain: Interferon-induced protein 44-like (447 aa).

Residues 1–159 (MKVTARLTWI…PVECEIFRVD (159 aa)) enclose the TLDc domain.

The protein belongs to the IFI44 family. As to quaternary structure, HA-28 antigen forms a complex with Kb MHC in BALB.B donor cells. Interacts with FKBP5; this interaction modulates IKBKB and IKBKE kinase activities. In terms of tissue distribution, expressed on cells of the hematopoietic lineage. Detected in transformed cell lines of the macrophage and B-cell lineage. Expressed in spleen and bone marrow.

Its subcellular location is the cytoplasm. Its function is as follows. Type I interferon-stimulated gene (ISG) that plays a critical role in antiviral and antibacterial activity. During bacterial infection, promotes macrophage differentiation and facilitates inflammatory cytokine secretion. Plays a role in the control of respiratory syncycial virus/RSV infection, reducing the ability of the virus to replicate. Acts as a feedback regulator of IFN responses by negatively regulating IKBKB kinase activity through interaction with FKBP5. In terms of biological role, precursor of the histocompatibility antigen HA-28 in BALB.B mice. More generally, minor histocompatibility antigens refer to immunogenic peptide which, when complexed with MHC, can generate an immune response after recognition by specific T-cells. The peptides are derived from polymorphic intracellular proteins, which are cleaved by normal pathways of antigen processing. The binding of these peptides to MHC molecules and its expression on the cell surface can stimulate T-cell responses and thereby trigger graft rejection or graft-versus-host disease (GVHD). More specifically, HA-28 minor antigen is transcribed in the BALB.B donor but not in host C57BL/6 cells. HA-28 is presented to the donor BALB.B cell surface by Kb MHC. This complex HA-28/Kb MHC elicits cytotoxic T-cell response in C57BL/6 mice immunized with BALB.B spleen cells. It induces C57BL/6 mice cells recognition and lysis by CD8 T-cell from BALB.B mice. This chain is Interferon-induced protein 44-like (Ifi44l), found in Mus musculus (Mouse).